The primary structure comprises 135 residues: MPAKTATAVKRTTTTKKSAAKRKTSKAVKKAGKRTQSKAKGAQKVKKAATRRTPSKSAGARKATKKAGARKASTKRSATKKTTAAPAAAAAPATDAPAAAATPSKATGSAKKASARKSSAKKPAKGGKKKSAKKN.

Positions 1–17 (MPAKTATAVKRTTTTKK) are enriched in low complexity. The disordered stretch occupies residues 1–135 (MPAKTATAVK…GGKKKSAKKN (135 aa)). Composition is skewed to basic residues over residues 18–54 (SAAK…RRTP) and 62–79 (KATK…RSAT). A compositionally biased stretch (low complexity) spans 80 to 112 (KKTTAAPAAAAAPATDAPAAAATPSKATGSAKK). Residues 113–135 (ASARKSSAKKPAKGGKKKSAKKN) show a composition bias toward basic residues.

The protein localises to the nucleus. Its subcellular location is the chromosome. Functionally, histones H1 are necessary for the condensation of nucleosome chains into higher-order structures. The polypeptide is Histone H1, macronuclear (Euplotes eurystomus (Ciliate)).